The primary structure comprises 122 residues: Small ribosomal subunit protein uS13 (122 aa).

Residues 95–122 (QLPVRGQRTHTNARTRKGKAKPIAGKKK) are disordered.

Belongs to the universal ribosomal protein uS13 family. As to quaternary structure, part of the 30S ribosomal subunit. Forms a loose heterodimer with protein S19. Forms two bridges to the 50S subunit in the 70S ribosome.

Its function is as follows. Located at the top of the head of the 30S subunit, it contacts several helices of the 16S rRNA. In the 70S ribosome it contacts the 23S rRNA (bridge B1a) and protein L5 of the 50S subunit (bridge B1b), connecting the 2 subunits; these bridges are implicated in subunit movement. Contacts the tRNAs in the A and P-sites. This chain is Small ribosomal subunit protein uS13, found in Beijerinckia indica subsp. indica (strain ATCC 9039 / DSM 1715 / NCIMB 8712).